A 111-amino-acid polypeptide reads, in one-letter code: Magnetosome protein MamF (111 aa).

Topologically, residues 1-17 (MAETILIETKTAGGNCR) are cytoplasmic. A helical transmembrane segment spans residues 18 to 38 (SYLMAGASYLGILCFVPLLMS). Residues 39–50 (RDDEYVYFHAKQ) lie on the Lumenal side of the membrane. Residues 51–71 (GLVLWMWSILAMFALHLPGIG) traverse the membrane as a helical segment. Position 72 (Lys-72) is a topological domain, cytoplasmic. Residues 73 to 93 (WLFGFSSMGVLMLSVVGLVSV) form a helical membrane-spanning segment. Residues 94–111 (ALRRTWRLPLISHVVALI) are Lumenal-facing.

Belongs to the magnetosome MamF/MmsF protein family. May form homooligomers. In terms of processing, subject to cleavage or degradation; identified by N-terminal sequencing of proteins that are about 103, 92 and 15 kDa in size.

It is found in the magnetosome membrane. In terms of biological role, plays a role in regulating magnetite crystal size; partially redundant function with MmsF. In Magnetospirillum gryphiswaldense (strain DSM 6361 / JCM 21280 / NBRC 15271 / MSR-1), this protein is Magnetosome protein MamF.